The primary structure comprises 490 residues: Glutamyl-tRNA(Gln) amidotransferase subunit A (490 aa).

Residues lysine 81 and serine 156 each act as charge relay system in the active site. Residue serine 180 is the Acyl-ester intermediate of the active site.

This sequence belongs to the amidase family. GatA subfamily. In terms of assembly, heterotrimer of A, B and C subunits.

The enzyme catalyses L-glutamyl-tRNA(Gln) + L-glutamine + ATP + H2O = L-glutaminyl-tRNA(Gln) + L-glutamate + ADP + phosphate + H(+). Allows the formation of correctly charged Gln-tRNA(Gln) through the transamidation of misacylated Glu-tRNA(Gln) in organisms which lack glutaminyl-tRNA synthetase. The reaction takes place in the presence of glutamine and ATP through an activated gamma-phospho-Glu-tRNA(Gln). This is Glutamyl-tRNA(Gln) amidotransferase subunit A from Nocardia farcinica (strain IFM 10152).